The sequence spans 214 residues: Pyridoxine/pyridoxamine 5'-phosphate oxidase (214 aa).

Residues 9-12 (RKDY) and K67 each bind substrate. Residues 62-67 (RMVLLK), 77-78 (FT), R83, K84, and Q106 contribute to the FMN site. Y124, R128, and S132 together coordinate substrate. FMN-binding positions include 141 to 142 (QS) and W186. 192-194 (RLH) is a substrate binding site. R196 contributes to the FMN binding site.

It belongs to the pyridoxamine 5'-phosphate oxidase family. Homodimer. FMN is required as a cofactor.

It catalyses the reaction pyridoxamine 5'-phosphate + O2 + H2O = pyridoxal 5'-phosphate + H2O2 + NH4(+). The catalysed reaction is pyridoxine 5'-phosphate + O2 = pyridoxal 5'-phosphate + H2O2. It functions in the pathway cofactor metabolism; pyridoxal 5'-phosphate salvage; pyridoxal 5'-phosphate from pyridoxamine 5'-phosphate: step 1/1. It participates in cofactor metabolism; pyridoxal 5'-phosphate salvage; pyridoxal 5'-phosphate from pyridoxine 5'-phosphate: step 1/1. In terms of biological role, catalyzes the oxidation of either pyridoxine 5'-phosphate (PNP) or pyridoxamine 5'-phosphate (PMP) into pyridoxal 5'-phosphate (PLP). The chain is Pyridoxine/pyridoxamine 5'-phosphate oxidase from Trichormus variabilis (strain ATCC 29413 / PCC 7937) (Anabaena variabilis).